The sequence spans 89 residues: Large ribosomal subunit protein uL29 (89 aa).

It belongs to the universal ribosomal protein uL29 family.

The chain is Large ribosomal subunit protein uL29 from Frankia alni (strain DSM 45986 / CECT 9034 / ACN14a).